Here is a 224-residue protein sequence, read N- to C-terminus: UPF0758 protein lin1584 (224 aa).

One can recognise an MPN domain in the interval 102–224; it reads VIRCPEDAVK…YISLKEKGYF (123 aa). The Zn(2+) site is built by His-173, His-175, and Asp-186. The JAMM motif motif lies at 173–186; sequence HNHPSGDPAPSSED.

It belongs to the UPF0758 family.

In Listeria innocua serovar 6a (strain ATCC BAA-680 / CLIP 11262), this protein is UPF0758 protein lin1584.